The chain runs to 214 residues: 3,4-dihydroxy-2-butanone 4-phosphate synthase (214 aa).

Residues 40–41 (RE), Asp-45, 153–157 (RRGHT), and Glu-177 contribute to the D-ribulose 5-phosphate site. Residue Glu-41 participates in Mg(2+) binding. A Mg(2+)-binding site is contributed by His-156.

It belongs to the DHBP synthase family. Homodimer. The cofactor is Mg(2+). Mn(2+) is required as a cofactor.

It carries out the reaction D-ribulose 5-phosphate = (2S)-2-hydroxy-3-oxobutyl phosphate + formate + H(+). It participates in cofactor biosynthesis; riboflavin biosynthesis; 2-hydroxy-3-oxobutyl phosphate from D-ribulose 5-phosphate: step 1/1. Catalyzes the conversion of D-ribulose 5-phosphate to formate and 3,4-dihydroxy-2-butanone 4-phosphate. This chain is 3,4-dihydroxy-2-butanone 4-phosphate synthase, found in Rhodospirillum rubrum (strain ATCC 11170 / ATH 1.1.1 / DSM 467 / LMG 4362 / NCIMB 8255 / S1).